The sequence spans 193 residues: dCTP deaminase (193 aa).

DCTP is bound by residues 110 to 115 (RSSLAR), Asp128, 136 to 138 (VLE), Tyr171, Lys178, and Gln182. The active-site Proton donor/acceptor is the Glu138.

This sequence belongs to the dCTP deaminase family. In terms of assembly, homotrimer.

It catalyses the reaction dCTP + H2O + H(+) = dUTP + NH4(+). The protein operates within pyrimidine metabolism; dUMP biosynthesis; dUMP from dCTP (dUTP route): step 1/2. Its function is as follows. Catalyzes the deamination of dCTP to dUTP. This Aeromonas hydrophila subsp. hydrophila (strain ATCC 7966 / DSM 30187 / BCRC 13018 / CCUG 14551 / JCM 1027 / KCTC 2358 / NCIMB 9240 / NCTC 8049) protein is dCTP deaminase.